Reading from the N-terminus, the 458-residue chain is Argininosuccinate lyase (458 aa).

The protein belongs to the lyase 1 family. Argininosuccinate lyase subfamily.

It localises to the cytoplasm. The enzyme catalyses 2-(N(omega)-L-arginino)succinate = fumarate + L-arginine. The protein operates within amino-acid biosynthesis; L-arginine biosynthesis; L-arginine from L-ornithine and carbamoyl phosphate: step 3/3. This is Argininosuccinate lyase from Anoxybacillus flavithermus (strain DSM 21510 / WK1).